Reading from the N-terminus, the 208-residue chain is Uracil phosphoribosyltransferase (208 aa).

5-phospho-alpha-D-ribose 1-diphosphate contacts are provided by residues R78, R103, and 130–138; that span reads DPMLATGGS. Uracil is bound by residues I193 and 198 to 200; that span reads GDA. Residue D199 coordinates 5-phospho-alpha-D-ribose 1-diphosphate.

Belongs to the UPRTase family. It depends on Mg(2+) as a cofactor.

The catalysed reaction is UMP + diphosphate = 5-phospho-alpha-D-ribose 1-diphosphate + uracil. The protein operates within pyrimidine metabolism; UMP biosynthesis via salvage pathway; UMP from uracil: step 1/1. Its activity is regulated as follows. Allosterically activated by GTP. In terms of biological role, catalyzes the conversion of uracil and 5-phospho-alpha-D-ribose 1-diphosphate (PRPP) to UMP and diphosphate. The polypeptide is Uracil phosphoribosyltransferase (Roseiflexus castenholzii (strain DSM 13941 / HLO8)).